The sequence spans 792 residues: Kinesin-like protein KIFC2 (792 aa).

Disordered regions lie at residues 22–45 (AAAV…RRRP) and 142–184 (QGTQ…QEHQ). Residues 142–169 (QGTQPTCPVQPSTLDGSLSQEESSSQPT) are compositionally biased toward polar residues. Residues 186 to 347 (LQLEEEQRVW…ARMASLRQGC (162 aa)) are a coiled coil. The Kinesin motor domain occupies 409–732 (NIRVLCRLRP…LKFAERVGQV (324 aa)). 486–493 (GQTGTGKT) contributes to the ATP binding site. Residues 734 to 792 (LGPARRRRAPRSGTPSSLSTDTPLTGTSCTPTPSPGSPPSTSPNSCSGLTLEPPGDPPP) are disordered. Positions 744–764 (RSGTPSSLSTDTPLTGTSCTP) are enriched in low complexity. Residues 765–774 (TPSPGSPPST) show a composition bias toward pro residues.

It belongs to the TRAFAC class myosin-kinesin ATPase superfamily. Kinesin family. Present in axons and dendrites of neurons in the central and peripheral nervous systems.

It is found in the cytoplasm. The protein localises to the cytoskeleton. Its function is as follows. May play a role in microtubule-dependent retrograde axonal transport. May function as the motor for the transport of multivesicular body (MVB)-like organelles in dendrites. This Mus musculus (Mouse) protein is Kinesin-like protein KIFC2 (Kifc2).